Reading from the N-terminus, the 408-residue chain is Na(+)/H(+) antiporter NhaA (408 aa).

12 consecutive transmembrane segments (helical) span residues 42–62 (LMFV…PVYF), 69–89 (VLGL…FFLL), 110–130 (ALPG…FIAV), 140–160 (GWAI…SLLG), 169–189 (IFLT…IALF), 192–212 (AELT…LAAL), 215–235 (FGVK…FFVL), 238–258 (GIHA…QAST), 277–297 (VAFL…FAGL), 312–332 (LGLF…AIWL), 346–366 (LYGV…IGLL), and 380–400 (IGVL…LRVT).

The protein belongs to the NhaA Na(+)/H(+) (TC 2.A.33) antiporter family.

It localises to the cell inner membrane. The catalysed reaction is Na(+)(in) + 2 H(+)(out) = Na(+)(out) + 2 H(+)(in). Its function is as follows. Na(+)/H(+) antiporter that extrudes sodium in exchange for external protons. The sequence is that of Na(+)/H(+) antiporter NhaA from Nitrobacter hamburgensis (strain DSM 10229 / NCIMB 13809 / X14).